The primary structure comprises 793 residues: Ribosome biogenesis protein BOP1 homolog (793 aa).

Over residues 1 to 11 (MTKKLTLKRKG) the composition is skewed to basic residues. Residues 1–168 (MTKKLTLKRK…DSDTSDEEDI (168 aa)) are disordered. 3 stretches are compositionally biased toward acidic residues: residues 44 to 53 (EDTTDDEGID), 60 to 72 (SSED…DEEG), and 83 to 116 (SSEE…DGDE). Residues 117-129 (EKPTTSKQNKSED) show a composition bias toward basic and acidic residues. Polar residues predominate over residues 133–143 (SSKVSKKTQPP). Over residues 146–161 (DLVKRDPSHPEYHDSD) the composition is skewed to basic and acidic residues. 7 WD repeats span residues 454–495 (GHTD…RTIE), 497–535 (EDVV…KVLV), 579–621 (NHFK…SQIP), 624–662 (KSKG…LVKK), 665–704 (TNSK…KPYQ), 708–747 (LHRN…DLLQ), and 763–793 (REDF…RLYT).

Belongs to the WD repeat BOP1/ERB1 family.

The protein resides in the nucleus. Its subcellular location is the nucleolus. It is found in the nucleoplasm. Its function is as follows. Required for maturation of ribosomal RNAs and formation of the large ribosomal subunit. In Drosophila ananassae (Fruit fly), this protein is Ribosome biogenesis protein BOP1 homolog.